A 587-amino-acid polypeptide reads, in one-letter code: Solute carrier family 13 member 2 (587 aa).

4 helical membrane-spanning segments follow: residues 13–33 (FYLI…IVQT), 53–73 (ALPL…MGIM), 86–106 (TNIL…WNLH), and 136–156 (SMWI…HAVL). The tract at residues 188 to 208 (KLDNGQPVSAPSEPRTQKTQE) is disordered. 8 helical membrane-spanning segments follow: residues 264–284 (FAFP…QVLF), 329–349 (VLFV…FPGW), 367–387 (TVAI…PGLM), 407–427 (TVND…FALA), 445–465 (PLQH…IAIF), 477–497 (LFLP…LYVM), 506–526 (LAFM…FGGL), and 535–555 (GFLL…SWSI).

This sequence belongs to the SLC13A/DASS transporter (TC 2.A.47) family. NADC subfamily. Expressed in large and small intestine and in the kidney proximal tubules.

It is found in the apical cell membrane. The enzyme catalyses succinate(out) + 3 Na(+)(out) = succinate(in) + 3 Na(+)(in). It catalyses the reaction fumarate(out) + 3 Na(+)(out) = fumarate(in) + 3 Na(+)(in). It carries out the reaction 2-oxoglutarate(out) + 3 Na(+)(out) = 2-oxoglutarate(in) + 3 Na(+)(in). Its activity is regulated as follows. Li(+) decreases succinate transport in the presence of Na(+), by competing at one of the three cation binding sites. Low-affinity sodium-dicarboxylate cotransporter, that mediates the entry of citric acid cycle intermediates, such as succinate, citrate, fumarate and alpha-ketoglutarate (2-oxoglutarate) into the small intestine and renal proximal tubule. Transports the dicarboxylate into the cell with a probable stoichiometry of 3 Na(+) for 1 divalent dicarboxylate, rendering the process electrogenic. Citrate is transported in protonated form as a divalent anion, rather than the trivalent form which is normally found in blood. Has a critical role in renal dicarboxylate transport. This is Solute carrier family 13 member 2 (Slc13a2) from Rattus norvegicus (Rat).